The sequence spans 88 residues: Small ribosomal subunit protein bS20 (88 aa).

The disordered stretch occupies residues 1–27; sequence MANTPQAKKRARQNEKARKHNASMRSM. A compositionally biased stretch (basic residues) spans 7-22; it reads AKKRARQNEKARKHNA.

It belongs to the bacterial ribosomal protein bS20 family.

Binds directly to 16S ribosomal RNA. The polypeptide is Small ribosomal subunit protein bS20 (Cellvibrio japonicus (strain Ueda107) (Pseudomonas fluorescens subsp. cellulosa)).